Consider the following 174-residue polypeptide: Crossover junction endodeoxyribonuclease RuvC (174 aa).

Active-site residues include Asp-8, Glu-69, and Asp-141. Mg(2+) is bound by residues Asp-8, Glu-69, and Asp-141.

It belongs to the RuvC family. In terms of assembly, homodimer which binds Holliday junction (HJ) DNA. The HJ becomes 2-fold symmetrical on binding to RuvC with unstacked arms; it has a different conformation from HJ DNA in complex with RuvA. In the full resolvosome a probable DNA-RuvA(4)-RuvB(12)-RuvC(2) complex forms which resolves the HJ. It depends on Mg(2+) as a cofactor.

The protein localises to the cytoplasm. The catalysed reaction is Endonucleolytic cleavage at a junction such as a reciprocal single-stranded crossover between two homologous DNA duplexes (Holliday junction).. Its function is as follows. The RuvA-RuvB-RuvC complex processes Holliday junction (HJ) DNA during genetic recombination and DNA repair. Endonuclease that resolves HJ intermediates. Cleaves cruciform DNA by making single-stranded nicks across the HJ at symmetrical positions within the homologous arms, yielding a 5'-phosphate and a 3'-hydroxyl group; requires a central core of homology in the junction. The consensus cleavage sequence is 5'-(A/T)TT(C/G)-3'. Cleavage occurs on the 3'-side of the TT dinucleotide at the point of strand exchange. HJ branch migration catalyzed by RuvA-RuvB allows RuvC to scan DNA until it finds its consensus sequence, where it cleaves and resolves the cruciform DNA. The polypeptide is Crossover junction endodeoxyribonuclease RuvC (Xanthomonas oryzae pv. oryzae (strain MAFF 311018)).